Reading from the N-terminus, the 278-residue chain is Probable endonuclease 4 (278 aa).

Residues His67, His107, Glu141, Asp173, His176, His210, Asp223, His225, and Glu255 each coordinate Zn(2+).

The protein belongs to the AP endonuclease 2 family. Zn(2+) serves as cofactor.

It carries out the reaction Endonucleolytic cleavage to 5'-phosphooligonucleotide end-products.. Its function is as follows. Endonuclease IV plays a role in DNA repair. It cleaves phosphodiester bonds at apurinic or apyrimidinic (AP) sites, generating a 3'-hydroxyl group and a 5'-terminal sugar phosphate. The chain is Probable endonuclease 4 from Natronomonas pharaonis (strain ATCC 35678 / DSM 2160 / CIP 103997 / JCM 8858 / NBRC 14720 / NCIMB 2260 / Gabara) (Halobacterium pharaonis).